Reading from the N-terminus, the 142-residue chain is Large ribosomal subunit protein uL13 (142 aa).

The protein belongs to the universal ribosomal protein uL13 family. Part of the 50S ribosomal subunit.

In terms of biological role, this protein is one of the early assembly proteins of the 50S ribosomal subunit, although it is not seen to bind rRNA by itself. It is important during the early stages of 50S assembly. The protein is Large ribosomal subunit protein uL13 of Vibrio atlanticus (strain LGP32) (Vibrio splendidus (strain Mel32)).